The chain runs to 269 residues: Glutamate racemase (269 aa).

Substrate-binding positions include 14–15 (DS) and 46–47 (YS). Residue cysteine 78 is the Proton donor/acceptor of the active site. 79-80 (NT) contacts substrate. Cysteine 189 acts as the Proton donor/acceptor in catalysis. 190 to 191 (TH) is a binding site for substrate.

The protein belongs to the aspartate/glutamate racemases family.

It carries out the reaction L-glutamate = D-glutamate. Its pathway is cell wall biogenesis; peptidoglycan biosynthesis. Provides the (R)-glutamate required for cell wall biosynthesis. This Haemophilus influenzae (strain 86-028NP) protein is Glutamate racemase.